Here is a 310-residue protein sequence, read N- to C-terminus: ADP-L-glycero-D-manno-heptose-6-epimerase (310 aa).

Residues 10-11 (FI), 31-32 (DN), Lys38, Lys53, 75-79 (EGACS), and Asn92 each bind NADP(+). The active-site Proton acceptor is Tyr140. Lys144 is an NADP(+) binding site. Asn169 is a substrate binding site. The NADP(+) site is built by Val170 and Lys178. The active-site Proton acceptor is the Lys178. Residues Ser180, His187, 201–204 (FEGS), Arg209, and Tyr272 each bind substrate.

The protein belongs to the NAD(P)-dependent epimerase/dehydratase family. HldD subfamily. As to quaternary structure, homopentamer. Requires NADP(+) as cofactor.

The catalysed reaction is ADP-D-glycero-beta-D-manno-heptose = ADP-L-glycero-beta-D-manno-heptose. Its pathway is nucleotide-sugar biosynthesis; ADP-L-glycero-beta-D-manno-heptose biosynthesis; ADP-L-glycero-beta-D-manno-heptose from D-glycero-beta-D-manno-heptose 7-phosphate: step 4/4. Its function is as follows. Catalyzes the interconversion between ADP-D-glycero-beta-D-manno-heptose and ADP-L-glycero-beta-D-manno-heptose via an epimerization at carbon 6 of the heptose. This Salmonella arizonae (strain ATCC BAA-731 / CDC346-86 / RSK2980) protein is ADP-L-glycero-D-manno-heptose-6-epimerase.